A 520-amino-acid chain; its full sequence is Bile acid--coenzyme A ligase (520 aa).

It belongs to the ATP-dependent AMP-binding enzyme family. In terms of assembly, homodimer. Requires Mg(2+) as cofactor.

It carries out the reaction cholate + ATP + CoA = choloyl-CoA + AMP + diphosphate. The enzyme catalyses deoxycholate + ATP + CoA = deoxycholoyl-CoA + AMP + diphosphate. It catalyses the reaction chenodeoxycholate + ATP + CoA = chenodeoxycholoyl-CoA + AMP + diphosphate. It functions in the pathway lipid metabolism; bile acid biosynthesis. With respect to regulation, inhibited by diphosphate. In terms of biological role, functions in the bile acid 7alpha-dehydroxylation pathway, which forms secondary bile acids via the 7alpha-dehydroxylation of primary bile acids, and is carried out by intestinal anaerobic bacteria. Catalyzes the initial step in this pathway, i.e. the ATP-dependent thioesterification of primary bile acids with coenzyme A. Is active with C-24 bile acids with free carboxyl groups such as cholate, deoxycholate and chenodeoxycholate. Produces AMP and pyrophosphate in addition to the bile acid-CoA thioester. The protein is Bile acid--coenzyme A ligase of Clostridium scindens (strain JCM 10418 / VPI 12708).